We begin with the raw amino-acid sequence, 1162 residues long: Leptin receptor (1162 aa).

Residues 1–21 form the signal peptide; the sequence is MMCQKFYVVLLHWEFLYVIAA. Topologically, residues 22–839 are extracellular; the sequence is LNLAYPISPW…AIDKQQNDAG (818 aa). 5 disulfide bridges follow: Cys-37/Cys-90, Cys-89/Cys-99, Cys-131/Cys-142, Cys-186/Cys-195, and Cys-188/Cys-193. Asn-41, Asn-56, Asn-73, and Asn-98 each carry an N-linked (GlcNAc...) asparagine glycan. The N-linked (GlcNAc...) asparagine glycan is linked to Asn-187. The Fibronectin type-III 1 domain maps to 238–331; sequence PPLGLHMEVT…SPQVFTTQDV (94 aa). N-linked (GlcNAc...) asparagine glycosylation is found at Asn-275 and Asn-345. Residues 329-427 form the Ig-like domain; that stretch reads QDVVYFPPKI…HRYAELYVID (99 aa). 2 cysteine pairs are disulfide-bonded: Cys-350/Cys-410 and Cys-411/Cys-416. N-linked (GlcNAc...) asparagine glycosylation occurs at Asn-431. Disulfide bonds link Cys-434–Cys-445, Cys-471–Cys-526, and Cys-486–Cys-496. The leptin-binding stretch occupies residues 465-482; sequence HRRSLYCPDSPSIHPTSE. Asn-514, Asn-622, Asn-657, Asn-668, Asn-686, Asn-695, Asn-698, and Asn-726 each carry an N-linked (GlcNAc...) asparagine glycan. Fibronectin type-III domains follow at residues 537–632, 637–729, and 738–832; these read PPSN…TLVM, PMRG…NLTF, and AVES…DAID. The WSXWS motif motif lies at 620–624; that stretch reads WSNWS. The chain crosses the membrane as a helical span at residues 840 to 860; it reads LYVIVPIIISSCVLLLGTLLI. Residues 861–1162 are Cytoplasmic-facing; sequence SHQRMKKLFW…MENKMCDLTV (302 aa). The short motif at 869-877 is the Box 1 motif element; it reads FWDDVPNPK. The residue at position 880 (Ser-880) is a Phosphoserine. Residues 891-896 form a required for JAK2 activation region; sequence ETFEHL. Residues 896–904 form a required for STAT3 phosphorylation region; it reads LFTKHAESV. Tyr-985 bears the Phosphotyrosine; by JAK2 mark. Tyr-1077 is modified (phosphotyrosine). Tyr-1138 carries the post-translational modification Phosphotyrosine; by JAK2.

The protein belongs to the type I cytokine receptor family. Type 2 subfamily. As to quaternary structure, present as a mixture of monomers and dimers. The phosphorylated receptor binds a number of SH2 domain-containing proteins such as JAK2, STAT3, PTPN11, and SOCS3. Interaction with SOCS3 inhibits JAK/STAT signaling and MAPK cascade. On ligand binding, phosphorylated on two conserved C-terminal tyrosine residues (isoform B only) by JAK2. Tyr-985 is required for complete binding and activation of PTPN11, ERK/FOS activation,for interaction with SOCS3 and SOCS3 mediated inhibition of leptin signaling. Phosphorylation on Tyr-1138 is required for STAT3 binding/activation. Phosphorylation of Tyr-1077 has a more accessory role. As to expression, isoform A: highest level of expression in lung and kidney, also present in heart, brain, spleen, liver, muscle, choroid plexus and hypothalamus. Isoform B: highest levels of expression in hypothalamus and lower levels in brain, testes and adipose tissue. Expressed by neurons of the parabrachial nucleus. Expressed by peripheral blood mononuclear cells and CD4(+) T-cells. Isoform E: expressed in adipose tissue, liver, hypothalamus, cerebral microvessels, heart, and testes.

The protein resides in the cell membrane. Its subcellular location is the basolateral cell membrane. It localises to the secreted. In terms of biological role, receptor for hormone LEP/leptin. On ligand binding, mediates LEP central and peripheral effects through the activation of different signaling pathways such as JAK2/STAT3 and MAPK cascade/FOS. In the hypothalamus, LEP acts as an appetite-regulating factor that induces a decrease in food intake and an increase in energy consumption by inducing anorexinogenic factors and suppressing orexigenic neuropeptides, also regulates bone mass and secretion of hypothalamo-pituitary-adrenal hormones. In the periphery, increases basal metabolism, influences reproductive function, regulates pancreatic beta-cell function and insulin secretion, is pro-angiogenic and affects innate and adaptive immunity. Control of energy homeostasis and melanocortin production (stimulation of POMC and full repression of AgRP transcription) is mediated by STAT3 signaling, whereas distinct signals regulate NPY and the control of fertility, growth and glucose homeostasis. Involved in the regulation of counter-regulatory response to hypoglycemia by inhibiting neurons of the parabrachial nucleus. Has a specific effect on T lymphocyte responses, differentially regulating the proliferation of naive and memory T-cells. Leptin increases Th1 and suppresses Th2 cytokine production. May transport LEP across the blood-brain barrier. Binds LEP and mediates LEP endocytosis. Does not induce phosphorylation of and activate STAT3. Its function is as follows. Antagonizes Isoform A and isoform B-mediated LEP binding and endocytosis. This Mus musculus (Mouse) protein is Leptin receptor (Lepr).